Reading from the N-terminus, the 676-residue chain is tRNA uridine 5-carboxymethylaminomethyl modification enzyme MnmG (676 aa).

FAD is bound at residue 15–20 (GAGHAG). Residue 316–330 (GPRYCPSIEDKIVRF) participates in NAD(+) binding.

It belongs to the MnmG family. In terms of assembly, homodimer. Heterotetramer of two MnmE and two MnmG subunits. Requires FAD as cofactor.

The protein resides in the cytoplasm. In terms of biological role, NAD-binding protein involved in the addition of a carboxymethylaminomethyl (cmnm) group at the wobble position (U34) of certain tRNAs, forming tRNA-cmnm(5)s(2)U34. The protein is tRNA uridine 5-carboxymethylaminomethyl modification enzyme MnmG of Roseiflexus castenholzii (strain DSM 13941 / HLO8).